The primary structure comprises 406 residues: NAC transcription factor NAM-B1 (406 aa).

Residues 1–11 show a composition bias toward polar residues; sequence MGSPDSSSGSA. The interval 1 to 40 is disordered; that stretch reads MGSPDSSSGSAQKPPRHQHQHQPPPPRRQGSAPELPPGFR. The 170-residue stretch at 35–204 folds into the NAC domain; the sequence is LPPGFRFHPT…DWVLCRIYKK (170 aa). The DNA-binding element occupies 137–210; it reads VGVKKALVFY…IYKKTSKAAA (74 aa).

The protein resides in the nucleus. Its function is as follows. Transcription factor of the NAC family associated with the grain protein content (GPC). Sequences of the 11 European varieties of H.vulgare tested belongs to the same haplotype while the sequence found in H.spontaneum, an ancestor of the cultivated H.vulgare which has a higher GPC, belongs to an other haplotype. The sequence is that of NAC transcription factor NAM-B1 (NAM-B1) from Hordeum vulgare subsp. spontaneum (Wild barley).